A 61-amino-acid chain; its full sequence is MAKKSMVVKSSKKQKFPVREYTRCERCGRPHSVYRKFKLCRICFRELAYKGQIPGVRKASW.

C24, C27, C40, and C43 together coordinate Zn(2+).

The protein belongs to the universal ribosomal protein uS14 family. Zinc-binding uS14 subfamily. As to quaternary structure, part of the 30S ribosomal subunit. Contacts proteins S3 and S10. It depends on Zn(2+) as a cofactor.

Binds 16S rRNA, required for the assembly of 30S particles and may also be responsible for determining the conformation of the 16S rRNA at the A site. The chain is Small ribosomal subunit protein uS14 from Staphylococcus carnosus (strain TM300).